A 48-amino-acid polypeptide reads, in one-letter code: Delta-stichotoxin-Hmg4b (48 aa).

3 disulfides stabilise this stretch: cysteine 3/cysteine 43, cysteine 5/cysteine 33, and cysteine 26/cysteine 44.

Belongs to the sea anemone sodium channel inhibitory toxin family. Type II subfamily.

The protein localises to the secreted. It localises to the nematocyst. In terms of biological role, binds specifically to voltage-gated sodium channels (Nav), thereby delaying their inactivation during signal transduction. Its toxicity is greater than that of RpII (AC P01534). This is Delta-stichotoxin-Hmg4b from Heteractis magnifica (Magnificent sea anemone).